The sequence spans 79 residues: MAKVCQVTGKRPQSGNNVSHANKKTNRRFLPNLKKRRFWLPDEKRFITLTVSTHGMRIIDKLGINAVLKKIREREKESK.

The interval 1–26 (MAKVCQVTGKRPQSGNNVSHANKKTN) is disordered. Residues 11–20 (RPQSGNNVSH) show a composition bias toward polar residues.

Belongs to the bacterial ribosomal protein bL28 family.

This Coxiella burnetii (strain CbuK_Q154) (Coxiella burnetii (strain Q154)) protein is Large ribosomal subunit protein bL28.